A 428-amino-acid polypeptide reads, in one-letter code: Elongation factor 1-alpha (428 aa).

Positions 5 to 217 (KPHVNIVFIG…DQIPEPEKPT (213 aa)) constitute a tr-type G domain. Positions 14–21 (GHVDHGKS) are G1. Residue 14-21 (GHVDHGKS) participates in GTP binding. A Mg(2+)-binding site is contributed by serine 21. Residues 68 to 72 (GITID) are G2. The tract at residues 89–92 (DAPG) is G3. Residues 89–93 (DAPGH) and 144–147 (NKMD) each bind GTP. The tract at residues 144-147 (NKMD) is G4. The interval 181 to 183 (SAW) is G5.

Belongs to the TRAFAC class translation factor GTPase superfamily. Classic translation factor GTPase family. EF-Tu/EF-1A subfamily.

The protein localises to the cytoplasm. The catalysed reaction is GTP + H2O = GDP + phosphate + H(+). GTP hydrolase that promotes the GTP-dependent binding of aminoacyl-tRNA to the A-site of ribosomes during protein biosynthesis. This chain is Elongation factor 1-alpha, found in Thermococcus sibiricus (strain DSM 12597 / MM 739).